A 418-amino-acid chain; its full sequence is AP-3 complex subunit mu-2 (418 aa).

One can recognise an MHD domain in the interval 176-417 (NNEAYFDVIE…MTKAGKFQVR (242 aa)).

It belongs to the adaptor complexes medium subunit family. As to quaternary structure, AP-3 associates with the BLOC-1 complex. Adaptor protein complex 3 (AP-3) is a heterotetramer composed of two large adaptins (delta-type subunit AP3D1 and beta-type subunit AP3B1 or AP3B2), a medium adaptin (mu-type subunit AP3M1 or AP3M2) and a small adaptin (sigma-type subunit APS1 or AP3S2).

The protein resides in the golgi apparatus. Its subcellular location is the cytoplasmic vesicle membrane. Part of the AP-3 complex, an adaptor-related complex which is not clathrin-associated. The complex is associated with the Golgi region as well as more peripheral structures. It facilitates the budding of vesicles from the Golgi membrane and may be directly involved in trafficking to lysosomes. In concert with the BLOC-1 complex, AP-3 is required to target cargos into vesicles assembled at cell bodies for delivery into neurites and nerve terminals. This Homo sapiens (Human) protein is AP-3 complex subunit mu-2 (AP3M2).